The following is a 621-amino-acid chain: Chaperone protein HtpG (621 aa).

An a; substrate-binding region spans residues 1 to 328 (MTQEKKKFDA…SEDLPLNISR (328 aa)). The b stretch occupies residues 329–544 (ESLQHNNVLE…DTAMDIRMER (216 aa)). Residues 545–621 (FLIEQKQIAN…LNDILQKAIL (77 aa)) are c.

This sequence belongs to the heat shock protein 90 family. In terms of assembly, homodimer.

The protein resides in the cytoplasm. Its function is as follows. Molecular chaperone. Has ATPase activity. The chain is Chaperone protein HtpG from Rickettsia prowazekii (strain Madrid E).